The chain runs to 168 residues: 2-C-methyl-D-erythritol 2,4-cyclodiphosphate synthase (168 aa).

Positions 13 and 15 each coordinate a divalent metal cation. 4-CDP-2-C-methyl-D-erythritol 2-phosphate-binding positions include 13–15 (DVH) and 39–40 (HS). An a divalent metal cation-binding site is contributed by histidine 47. 4-CDP-2-C-methyl-D-erythritol 2-phosphate-binding positions include 61 to 63 (DIG), 66 to 70 (FPDTD), phenylalanine 144, and lysine 147.

The protein belongs to the IspF family. In terms of assembly, homotrimer. It depends on a divalent metal cation as a cofactor.

It carries out the reaction 4-CDP-2-C-methyl-D-erythritol 2-phosphate = 2-C-methyl-D-erythritol 2,4-cyclic diphosphate + CMP. Its pathway is isoprenoid biosynthesis; isopentenyl diphosphate biosynthesis via DXP pathway; isopentenyl diphosphate from 1-deoxy-D-xylulose 5-phosphate: step 4/6. Its function is as follows. Involved in the biosynthesis of isopentenyl diphosphate (IPP) and dimethylallyl diphosphate (DMAPP), two major building blocks of isoprenoid compounds. Catalyzes the conversion of 4-diphosphocytidyl-2-C-methyl-D-erythritol 2-phosphate (CDP-ME2P) to 2-C-methyl-D-erythritol 2,4-cyclodiphosphate (ME-CPP) with a corresponding release of cytidine 5-monophosphate (CMP). This is 2-C-methyl-D-erythritol 2,4-cyclodiphosphate synthase from Ralstonia pickettii (strain 12J).